A 293-amino-acid chain; its full sequence is Formamidopyrimidine-DNA glycosylase (293 aa).

Pro-2 functions as the Schiff-base intermediate with DNA in the catalytic mechanism. Glu-3 (proton donor) is an active-site residue. Lys-58 (proton donor; for beta-elimination activity) is an active-site residue. DNA contacts are provided by His-104, Arg-123, and Lys-166. The segment at 257 to 293 adopts an FPG-type zinc-finger fold; the sequence is QVYDREGEPCRTDGCGGVVKRFVQNGRSTFWCPKCQR. The active-site Proton donor; for delta-elimination activity is the Arg-283.

Belongs to the FPG family. As to quaternary structure, monomer. The cofactor is Zn(2+).

It catalyses the reaction Hydrolysis of DNA containing ring-opened 7-methylguanine residues, releasing 2,6-diamino-4-hydroxy-5-(N-methyl)formamidopyrimidine.. It carries out the reaction 2'-deoxyribonucleotide-(2'-deoxyribose 5'-phosphate)-2'-deoxyribonucleotide-DNA = a 3'-end 2'-deoxyribonucleotide-(2,3-dehydro-2,3-deoxyribose 5'-phosphate)-DNA + a 5'-end 5'-phospho-2'-deoxyribonucleoside-DNA + H(+). Involved in base excision repair of DNA damaged by oxidation or by mutagenic agents. Acts as a DNA glycosylase that recognizes and removes damaged bases. Has a preference for oxidized purines, such as 7,8-dihydro-8-oxoguanine (8-oxoG). Has AP (apurinic/apyrimidinic) lyase activity and introduces nicks in the DNA strand. Cleaves the DNA backbone by beta-delta elimination to generate a single-strand break at the site of the removed base with both 3'- and 5'-phosphates. The chain is Formamidopyrimidine-DNA glycosylase from Bradyrhizobium sp. (strain BTAi1 / ATCC BAA-1182).